A 272-amino-acid chain; its full sequence is Putative pyruvate, phosphate dikinase regulatory protein (272 aa).

151–158 (GISRTSKT) provides a ligand contact to ADP.

It belongs to the pyruvate, phosphate/water dikinase regulatory protein family. PDRP subfamily.

It carries out the reaction N(tele)-phospho-L-histidyl/L-threonyl-[pyruvate, phosphate dikinase] + ADP = N(tele)-phospho-L-histidyl/O-phospho-L-threonyl-[pyruvate, phosphate dikinase] + AMP + H(+). The catalysed reaction is N(tele)-phospho-L-histidyl/O-phospho-L-threonyl-[pyruvate, phosphate dikinase] + phosphate + H(+) = N(tele)-phospho-L-histidyl/L-threonyl-[pyruvate, phosphate dikinase] + diphosphate. Bifunctional serine/threonine kinase and phosphorylase involved in the regulation of the pyruvate, phosphate dikinase (PPDK) by catalyzing its phosphorylation/dephosphorylation. This chain is Putative pyruvate, phosphate dikinase regulatory protein, found in Staphylococcus aureus (strain USA300).